A 337-amino-acid chain; its full sequence is Transcription factor bHLH121 (337 aa).

The 51-residue stretch at alanine 58–leucine 108 folds into the bHLH domain. A disordered region spans residues valine 235 to lysine 337. Basic and acidic residues-rich tracts occupy residues arginine 244–aspartate 263 and serine 280–threonine 291. Residues asparagine 297–serine 317 are compositionally biased toward low complexity.

In terms of assembly, homodimer. In terms of tissue distribution, expressed constitutively in roots, leaves, stems, and flowers.

It localises to the nucleus. This is Transcription factor bHLH121 (BHLH121) from Arabidopsis thaliana (Mouse-ear cress).